We begin with the raw amino-acid sequence, 238 residues long: Ribonuclease PH (238 aa).

Phosphate contacts are provided by residues arginine 86 and 124–126 (GTR).

Belongs to the RNase PH family. In terms of assembly, homohexameric ring arranged as a trimer of dimers.

It carries out the reaction tRNA(n+1) + phosphate = tRNA(n) + a ribonucleoside 5'-diphosphate. Phosphorolytic 3'-5' exoribonuclease that plays an important role in tRNA 3'-end maturation. Removes nucleotide residues following the 3'-CCA terminus of tRNAs; can also add nucleotides to the ends of RNA molecules by using nucleoside diphosphates as substrates, but this may not be physiologically important. Probably plays a role in initiation of 16S rRNA degradation (leading to ribosome degradation) during starvation. This Acinetobacter baumannii (strain AB307-0294) protein is Ribonuclease PH.